A 153-amino-acid polypeptide reads, in one-letter code: Large ribosomal subunit protein uL15 (153 aa).

A disordered region spans residues 21–41 (RGIGSGKGKTGGRGIKGQKSR). A compositionally biased stretch (gly residues) spans 23–35 (IGSGKGKTGGRGI).

This sequence belongs to the universal ribosomal protein uL15 family. In terms of assembly, part of the 50S ribosomal subunit.

Its function is as follows. Binds to the 23S rRNA. In Rickettsia massiliae (strain Mtu5), this protein is Large ribosomal subunit protein uL15.